The primary structure comprises 311 residues: Probable manganese-dependent inorganic pyrophosphatase (311 aa).

6 residues coordinate Mn(2+): histidine 9, aspartate 13, aspartate 15, aspartate 75, histidine 97, and aspartate 149.

The protein belongs to the PPase class C family. Mn(2+) serves as cofactor.

The protein resides in the cytoplasm. It catalyses the reaction diphosphate + H2O = 2 phosphate + H(+). In Lactobacillus acidophilus (strain ATCC 700396 / NCK56 / N2 / NCFM), this protein is Probable manganese-dependent inorganic pyrophosphatase.